Consider the following 379-residue polypeptide: Isocitrate dehydrogenase [NAD] subunit 2, mitochondrial (379 aa).

The transit peptide at 1-27 (MSMLSTLRTAGSLRTFSRSACYSFQRF) directs the protein to the mitochondrion. Residues Arg129, Arg139, Arg160, and Asp247 each contribute to the substrate site. Residues Asp247, Asp273, and Asp277 each contribute to the Mg(2+) site.

The protein belongs to the isocitrate and isopropylmalate dehydrogenases family. In terms of assembly, octamer of two non-identical subunits IDH1 and IDH2. The cofactor is Mg(2+). It depends on Mn(2+) as a cofactor.

The protein localises to the mitochondrion. It carries out the reaction D-threo-isocitrate + NAD(+) = 2-oxoglutarate + CO2 + NADH. Functionally, performs an essential role in the oxidative function of the citric acid cycle and is involved in glutamate biosynthesis. Also binds RNA; specifically to the 5'-untranslated leaders of mitochondrial mRNAs. This is Isocitrate dehydrogenase [NAD] subunit 2, mitochondrial (idh2) from Schizosaccharomyces pombe (strain 972 / ATCC 24843) (Fission yeast).